The following is a 448-amino-acid chain: Probable D-serine dehydratase (448 aa).

Lys119 carries the N6-(pyridoxal phosphate)lysine modification.

The protein belongs to the serine/threonine dehydratase family. DsdA subfamily. Pyridoxal 5'-phosphate is required as a cofactor.

The catalysed reaction is D-serine = pyruvate + NH4(+). The polypeptide is Probable D-serine dehydratase (Pseudomonas paraeruginosa (strain DSM 24068 / PA7) (Pseudomonas aeruginosa (strain PA7))).